The sequence spans 316 residues: Olfactory receptor 1165 (316 aa).

The Extracellular portion of the chain corresponds to 1-28 (MMLDLGNESSVTMFILSGFSEYPHLHAP). An N-linked (GlcNAc...) asparagine glycan is attached at Asn-7. A helical transmembrane segment spans residues 29 to 50 (LFLLFFMIYTVTLIGNLGIIVV). Over 51–61 (RKVNPKLHTPM) the chain is Cytoplasmic. Residues 62-80 (YFFLSHLSFLDICYSSVFT) form a helical membrane-spanning segment. Over 81–99 (PKLLEILIVEDRTISFKGC) the chain is Extracellular. Cysteines 99 and 181 form a disulfide. A helical transmembrane segment spans residues 100 to 122 (MTQFFLICAFVITEMFMLAVMAY). Residues 123–141 (DRFVAVCNPLLYTVSMSPK) lie on the Cytoplasmic side of the membrane. A helical membrane pass occupies residues 142-166 (LCAFLVAGTYMWGVLCSLTITYSLL). Residues 167 to 205 (QLSYCGPNIINHFGCEYSAILSLSCSDPTFSQVVCLTIS) are Extracellular-facing. A helical transmembrane segment spans residues 206-228 (IFNETCSLLIILASYVFIVVTII). Over 229-239 (KMPSKGGLQKA) the chain is Cytoplasmic. A helical transmembrane segment spans residues 240 to 263 (FSTCSSHLTAISIFHGIILLLYCV). Over 264–268 (PNSKN) the chain is Extracellular. Residues 269–291 (SWLVVKVATVLFTVMIPMLNPLI) traverse the membrane as a helical segment. Residues 292–316 (YSLRNKDVKGTVSRLMHLKLQAHST) lie on the Cytoplasmic side of the membrane.

It belongs to the G-protein coupled receptor 1 family.

The protein resides in the cell membrane. In terms of biological role, olfactory receptor. The sequence is that of Olfactory receptor 1165 from Mus musculus (Mouse).